We begin with the raw amino-acid sequence, 434 residues long: Nicotinate phosphoribosyltransferase (434 aa).

H242 is modified (phosphohistidine; by autocatalysis).

This sequence belongs to the NAPRTase family. Transiently phosphorylated on a His residue during the reaction cycle. Phosphorylation strongly increases the affinity for substrates and increases the rate of nicotinate D-ribonucleotide production. Dephosphorylation regenerates the low-affinity form of the enzyme, leading to product release.

It catalyses the reaction nicotinate + 5-phospho-alpha-D-ribose 1-diphosphate + ATP + H2O = nicotinate beta-D-ribonucleotide + ADP + phosphate + diphosphate. The protein operates within cofactor biosynthesis; NAD(+) biosynthesis; nicotinate D-ribonucleotide from nicotinate: step 1/1. In terms of biological role, catalyzes the synthesis of beta-nicotinate D-ribonucleotide from nicotinate and 5-phospho-D-ribose 1-phosphate at the expense of ATP. In Allorhizobium ampelinum (strain ATCC BAA-846 / DSM 112012 / S4) (Agrobacterium vitis (strain S4)), this protein is Nicotinate phosphoribosyltransferase.